The following is a 428-amino-acid chain: 4-hydroxy-3-methylbut-2-en-1-yl diphosphate synthase (flavodoxin) (428 aa).

[4Fe-4S] cluster is bound by residues Cys-315, Cys-318, Cys-361, and Glu-368.

Belongs to the IspG family. The cofactor is [4Fe-4S] cluster.

The catalysed reaction is (2E)-4-hydroxy-3-methylbut-2-enyl diphosphate + oxidized [flavodoxin] + H2O + 2 H(+) = 2-C-methyl-D-erythritol 2,4-cyclic diphosphate + reduced [flavodoxin]. It participates in isoprenoid biosynthesis; isopentenyl diphosphate biosynthesis via DXP pathway; isopentenyl diphosphate from 1-deoxy-D-xylulose 5-phosphate: step 5/6. In terms of biological role, converts 2C-methyl-D-erythritol 2,4-cyclodiphosphate (ME-2,4cPP) into 1-hydroxy-2-methyl-2-(E)-butenyl 4-diphosphate. The protein is 4-hydroxy-3-methylbut-2-en-1-yl diphosphate synthase (flavodoxin) of Ralstonia pickettii (strain 12J).